Reading from the N-terminus, the 161-residue chain is Large ribosomal subunit protein uL10 (161 aa).

The protein belongs to the universal ribosomal protein uL10 family. In terms of assembly, part of the ribosomal stalk of the 50S ribosomal subunit. The N-terminus interacts with L11 and the large rRNA to form the base of the stalk. The C-terminus forms an elongated spine to which L12 dimers bind in a sequential fashion forming a multimeric L10(L12)X complex.

Functionally, forms part of the ribosomal stalk, playing a central role in the interaction of the ribosome with GTP-bound translation factors. This chain is Large ribosomal subunit protein uL10, found in Buchnera aphidicola subsp. Cinara cedri (strain Cc).